A 443-amino-acid polypeptide reads, in one-letter code: MLTVLYLPIARKTFNTDVADTLRQETEELLQETVELISPMELMTSPDDLDAFLQDVSSPPDAIVYQSLTFADGEFIQAAVDRYSIPVIVWSVREPEVGGRLQLNSLTGGNSTSHVLRSNSHPYSFLFGNPDEAAVQERLGSLFRVMDTVKQVKSLNIGVIGEHPPGFYFSGTDTGELHDVFGAKVTTVDLYDAFARAKDVPEERWLPEVETAEKQVLTLNRDDATVQRFAQFTSAMREYIAEENLSALAIRCWPDFFNELGAAACSTLSHLTEESMVSACESDIHGALSMFILNRLSAGRAPYLGDMVHVNEENNALVFWHCGAGAYSLAREATGAQPGVHPNRKLGFTMEFGLKAGEVTLFRVGHTPEGYRLLVFKGEALDVPQRFNGTTVEIGLKQPVHSVMQELMEEGFEPHYALVHADVTKEIREIGRLFNLPVVEIEA.

The protein belongs to the SqvD family.

It catalyses the reaction 6-sulfo-beta-D-quinovose = 6-deoxy-6-sulfo-D-fructose. In terms of biological role, part of the sulfo-EMP2 pathway, a D-sulfoquinovose degradation pathway that produces sulfolactate (SL). Catalyzes the isomerization of sulfoquinovose (SQ) to 6-deoxy-6-sulfo-D-fructose (SF). The chain is Sulfoquinovose isomerase from Alkalicoccus urumqiensis (Bacillus urumqiensis).